The sequence spans 145 residues: MLPAISKSVLSLDVGKRRIGIAGCDPLGITITQLEAIKRTTFNNEATQLRQLCDLRDVRGIIIGLPLSDLGKETKQSSYCYTYGINIAKELNLPLAWVNEHSSTWEAGQRFKLQNDRSGKLDSAAAALLLEQWLTEGPELEFLKN.

It belongs to the YqgF nuclease family.

It is found in the cytoplasm. Functionally, could be a nuclease involved in processing of the 5'-end of pre-16S rRNA. The protein is Putative pre-16S rRNA nuclease of Prochlorococcus marinus (strain MIT 9211).